Here is a 935-residue protein sequence, read N- to C-terminus: Progesterone receptor (935 aa).

Residues 1–49 (MTELKAKGXRAPHVAGSPSSPKVXSPLPCRQAAXPFPGSQTSDTLPEVS) are disordered. The AF3; mediates transcriptional activation stretch occupies residues 1 to 164 (MTELKAKGXR…SATQRVLSRL (164 aa)). Positions 1–568 (MTELKAKGXR…YSFESLPQKI (568 aa)) are modulating, Pro-Rich. Residues 17–28 (SPSSPKVXSPLP) are compositionally biased toward low complexity. A Phosphoserine modification is found at S20. The short motif at 55–59 (LDGLL) is the LXXL motif 1 element. The tract at residues 61–255 (PRICQGQDPP…GAAAGGGAAA (195 aa)) is disordered. S81 carries the phosphoserine modification. The short motif at 115–119 (LDTLW) is the LXXL motif 2 element. Residues S130 and S162 each carry the phosphoserine modification. Positions 165–305 (MSRSGGKAGD…LATTVTDFIH (141 aa)) are mediates transcriptional transrepression. The Nuclear localization signal signature appears at 183–187 (KVLPR). The residue at position 190 (S190) is a Phosphoserine. The segment covering 191-203 (PSRQLLLPTTGSP) has biased composition (polar residues). A Phosphoserine modification is found at S213. The span at 220-231 (EVEEEDGSESED) shows a compositional bias: acidic residues. A compositionally biased stretch (low complexity) spans 232–246 (SAGPLLKGKPRALGG). Phosphoserine; by MAPK1 is present on S294. The segment at 331–365 (GGAGAASAFAPPRSSPSASSTPVPGGDFPDCAYAP) is disordered. The span at 335-356 (AASAFAPPRSSPSASSTPVPGG) shows a compositional bias: low complexity. S345 is subject to Phosphoserine; by MAPK. K388 is covalently cross-linked (Glycyl lysine isopeptide (Lys-Gly) (interchain with G-Cter in SUMO); alternate). K388 is covalently cross-linked (Glycyl lysine isopeptide (Lys-Gly) (interchain with G-Cter in ubiquitin); alternate). Position 400 is a phosphoserine; by CDK2 (S400). The interval 415–452 (PDFPLGPPPPLPPRAPPSRPGEAAVTAAPASASVSSAS) is disordered. Over residues 418–433 (PLGPPPPLPPRAPPSR) the composition is skewed to pro residues. The segment covering 434 to 452 (PGEAAVTAAPASASVSSAS) has biased composition (low complexity). The tract at residues 456–548 (STLECILYKA…VYPPYLNYLR (93 aa)) is AF1; mediates transcriptional activation. Residue K533 forms a Glycyl lysine isopeptide (Lys-Gly) (interchain with G-Cter in SUMO) linkage. NR C4-type zinc fingers lie at residues 569–589 (CLICGDEASGCHYGVLTCGSC) and 605–629 (CAGRNDCIVDKIRRKNCPACRLRKC). The segment at residues 569-641 (CLICGDEASG…AGMVLGGRKF (73 aa)) is a DNA-binding region (nuclear receptor). S678 is subject to Phosphoserine. The NR LBD domain occupies 681 to 915 (QDIQLIPPLI…EFPEMMSEVI (235 aa)). Residues 689-935 (LINLLLSIEP…MVKPLLFHKK (247 aa)) are AF2; mediates transcriptional activation.

The protein belongs to the nuclear hormone receptor family. In terms of assembly, interacts with SMARD1 and UNC45A. Interacts with CUEDC2; the interaction promotes ubiquitination, decreases sumoylation, and represses transcriptional activity. Interacts with PIAS3; the interaction promotes sumoylation of PR in a hormone-dependent manner, inhibits DNA-binding, and alters nuclear export. Interacts with SP1; the interaction requires ligand-induced phosphorylation on Ser-345 by ERK1/2-MAPK. Interacts with PRMT2. Interacts with NCOA2 and NCOA1. Interacts with KLF9. Interacts with GTF2B. Post-translationally, phosphorylated on multiple serine sites. Several of these sites are hormone-dependent. Phosphorylation on Ser-294 is highly hormone-dependent and modulates ubiquitination and sumoylation on Lys-388. Phosphorylation on Ser-345 also requires induction by hormone. Basal phosphorylation on Ser-81, Ser-162, Ser-190 and Ser-400 is increased in response to progesterone and can be phosphorylated in vitro by the CDK2-A1 complex. Increased levels of phosphorylation on Ser-400 also in the presence of EGF, heregulin, IGF, PMA and FBS. Phosphorylation at this site by CDK2 is ligand-independent, and increases nuclear translocation and transcriptional activity. Phosphorylation at Ser-162 and Ser-294, but not at Ser-190, is impaired during the G(2)/M phase of the cell cycle. Phosphorylation on Ser-345 by ERK1/2 MAPK is required for interaction with SP1. Sumoylation is hormone-dependent and represses transcriptional activity. Sumoylation on all three sites is enhanced by PIAS3. Desumoylated by SENP1. Sumoylation on Lys-388, the main site of sumoylation, is repressed by ubiquitination on the same site, and modulated by phosphorylation at Ser-294. In terms of processing, ubiquitination is hormone-dependent and represses sumoylation on the same site. Promoted by MAPK-mediated phosphorylation on Ser-294. Post-translationally, palmitoylated by ZDHHC7 and ZDHHC21. Palmitoylation is required for plasma membrane targeting and for rapid intracellular signaling via ERK and AKT kinases and cAMP generation.

It is found in the nucleus. Its subcellular location is the cytoplasm. Functionally, the steroid hormones and their receptors are involved in the regulation of eukaryotic gene expression and affect cellular proliferation and differentiation in target tissues. Transcriptional activator of several progesteron-dependent promoters in a variety of cell types. Involved in activation of SRC-dependent MAPK signaling on hormone stimulation. The chain is Progesterone receptor (PGR) from Ateles paniscus (Black spider monkey).